The chain runs to 1507 residues: MQINIRNEIARELNVPTTELDDSLSFTALGGHSLSALRLVSICKRIGLSLAVGELLHDIPIKDIISRSTGMYDTAGSLPILENTDPSHPDVSFNAIITPSPSPSGPSTGCPTPDTLDTTDSQDADKISIPEMQLSLIQSTLANPGNNILAYHYMCSLADLPATRMAWQQVLEAESIFRTEFRIEHEGGYLVDTGFTPYRWRDTQVPNWEALHAERDKRPSFDNVAFEFQVITVAGDNSVACILWHVHHSFIDGFSMQLVMRKVSRVVAGHPVEAGPSFATVAWERDQIIKEREADARRYWKSQKRVLEAAASEIRMPRCDFAPRSIEFWNKVATFVIDVAQSDLLGYAARHHVTVPSVYYAAWALVLSIICDSNLVLLGVVMSGRSLPVPGILDVIGSLVNTLPMGVEVELGMDTVGFINRVFRQLVQLSSFDWSPPEHGYRRQFASVLAMQFDVGGHTGTTNEPSSRMNSEIPISITVESDQVIHLQFAPEYQETQVQLMGTLFTRAISCLAAAAENPEACAARLGAQSMSYQELDRWSDCVAVHLSMYIDKGAVVCVHASPCMHWLVAIYGILKAGGVYCPLNSKLDPELRNNMFQSSGAAIYLTPSASETKYRPRASRYVWAVEDLLQRQDDNNQDEFDHIPRAEGNAYLCFTSGSTGKPKGVLCTHRGLVAFQRDLEVRLHAQPGRRIAQTMSVSFDGSIHEIFSALSYGATLVLPTPEDPFSHLYDVDSCIFTPSLAATLDPSDYPNLCYVYLVGEQVTQDINDRWAASVALYNMYGPTEATCGASIKCLLPGRKVTVGRPNPTTRIYILDRNGRLAPPGVMGQIYLAGVQVSNGYIGQSDLTNERFFPDSICCGLGERMYATGDIGYWDGDGDLICLGRNDRQIKLRGFRLDLDDLEVRISKLPGVTRAAVSRRGDDLVALVQPATACAADCRKHMAAVLPTHAIPRYIIPVERFPMTPIGKLDYRAIAQTADVRYSATPSNEMSPTEQRVAAIWADILNMDRAQISRDSNFLAAGGHSLLQLRLAGRLNRAFNCSVPITDLVKAATLRDLSQRIDKLQEQACWKAQRLPPKMDKRAISRMEREWISKYEGNTSNTSFTVSFACRLDSAVDLARLKQSWDSVMEAHQVLRSRYCACAERYERVFSDHAPVAQRIAECRVLEEINRPFDLANDDLVRVVISPDTLLVTISHIICDLTTMQLLLSDVERVYDGAEPLGHRPMYMAADAWQRVAADADLAFWTSYLQDCPHSKAKRESYAGTSRVGIVPRETVLALEDFMRSSQFSHHQLALAAVALALKPNHDRIDSVIGGPFLNRWSEADMNTIGLFLEPLPFRIQFDPKAVPNADAHAFLQSVKCSSQAAISHAVPWQELVCHLGVTPEFPNHPLFETMVTFHTKGGGLSLQIDGIEPLYTWSEGAKFGLMCEFTTLSNGDILLRLEYDQGIYAPRDISIIENRIMTALRLLIKNVPWLDLIGELHEVDGATVCVTPGHKGSLFLSPLKRT.

Positions 1–72 (MQINIRNEIA…DIISRSTGMY (72 aa)) constitute a Carrier 1 domain. An O-(pantetheine 4'-phosphoryl)serine modification is found at Ser33. Positions 98–119 (TPSPSPSGPSTGCPTPDTLDTT) are disordered. Over residues 105-115 (GPSTGCPTPDT) the composition is skewed to low complexity. The condensation 1 stretch occupies residues 163 to 429 (TRMAWQQVLE…NRVFRQLVQL (267 aa)). The segment at 514–893 (AAAENPEACA…GRNDRQIKLR (380 aa)) is adenylation. A Carrier 2 domain is found at 988 to 1065 (NEMSPTEQRV…DLSQRIDKLQ (78 aa)). Ser1025 carries the post-translational modification O-(pantetheine 4'-phosphoryl)serine. The interval 1099–1471 (TSNTSFTVSF…MTALRLLIKN (373 aa)) is condensation 2.

The protein belongs to the NRP synthetase family.

It functions in the pathway mycotoxin biosynthesis. Its function is as follows. Nonribosomal peptide synthetase; part of the gene cluster that mediates the biosynthesis of acetylaranotin, a member of the epipolythiodioxopiperazine (ETP) class of toxins characterized by a disulfide-bridged cyclic dipeptide. The first step of acetylaranotin biosynthesis is performed by the NRPS ataP which produces diketopiperazine cyclo-L-Phe-L-Phe via the condensation of 2 phenylalanines (L-Phe). The ataC domain of ataTC then catalyzes the formation of bishydroxylation of cyclo-L-Phe-L-Phe. The glutathione S-transferase domain ataG in ataIMG further catalyzes the conjugation of two glutathiones to the bishydroxylated intermediate. Next, the dipeptidase ataJ removes the Glu residues. The following step is performed by the carbon sulfur lyase domain ataI of ataIMG which may convert the bis-cysteinyl adduct to yield an epidithiol intermediate. The ataT domain from ataTC then catalyzes the oxidation of the free dithiols, followed by a cyclization step catalyzed by the cytochrome P450 ataF. AtaF probably acts as an epoxidase to promote a dual epoxidation formation at C8 and C9 along with C8' and C9', followed by the spontaneous nucleophilic attack of the amide nitrogens N10 and N10' to yield an intermediate with the pyrrolidine partial structure. The final steps of acetylaranotin biosynthesis involve the acetylation and ring rearrangement of an epitetrathiodiketopiperazine intermediate to produce acetylaranotin. AtaH probably catalyzes the acetylation of epitetrathiodiketopiperazine to produce a diacetate and ataY is responsible for the formation of the dihydrooxepin moiety that converts the diacetate intermediate to acetylaranotin via acetylapoaranotin. Both enzymes could function independently in the absence of the other. The acetylaranotin bis-thiomethyltransferase ataS located outside of acetylaranotin gene cluster is the main thiomethyltransferase responsible for converting acetylaranotin and its related intermediates to their methylated forms. This Aspergillus terreus (strain NIH 2624 / FGSC A1156) protein is Nonribosomal peptide synthetase ataP.